The chain runs to 197 residues: Translation machinery-associated protein 22 (197 aa).

Positions 102-173 (VQIKRVERNK…DVKEWLLEVY (72 aa)) constitute an SUI1 domain.

It belongs to the DENR family. Interacts with the 40S ribosomal subunit.

Its subcellular location is the cytoplasm. The chain is Translation machinery-associated protein 22 (tma22) from Aspergillus niger (strain ATCC MYA-4892 / CBS 513.88 / FGSC A1513).